The primary structure comprises 232 residues: 5'-methylthioadenosine/S-adenosylhomocysteine nucleosidase (232 aa).

E12 serves as the catalytic Proton acceptor. Substrate-binding positions include G78, I152, and 173-174 (ME). D197 serves as the catalytic Proton donor.

Belongs to the PNP/UDP phosphorylase family. MtnN subfamily. As to quaternary structure, homodimer.

The catalysed reaction is S-adenosyl-L-homocysteine + H2O = S-(5-deoxy-D-ribos-5-yl)-L-homocysteine + adenine. It catalyses the reaction S-methyl-5'-thioadenosine + H2O = 5-(methylsulfanyl)-D-ribose + adenine. It carries out the reaction 5'-deoxyadenosine + H2O = 5-deoxy-D-ribose + adenine. It participates in amino-acid biosynthesis; L-methionine biosynthesis via salvage pathway; S-methyl-5-thio-alpha-D-ribose 1-phosphate from S-methyl-5'-thioadenosine (hydrolase route): step 1/2. Its function is as follows. Catalyzes the irreversible cleavage of the glycosidic bond in both 5'-methylthioadenosine (MTA) and S-adenosylhomocysteine (SAH/AdoHcy) to adenine and the corresponding thioribose, 5'-methylthioribose and S-ribosylhomocysteine, respectively. Also cleaves 5'-deoxyadenosine, a toxic by-product of radical S-adenosylmethionine (SAM) enzymes, into 5-deoxyribose and adenine. Thus, is required for in vivo function of the radical SAM enzymes biotin synthase and lipoic acid synthase, that are inhibited by 5'-deoxyadenosine accumulation. This is 5'-methylthioadenosine/S-adenosylhomocysteine nucleosidase from Salmonella agona (strain SL483).